The sequence spans 121 residues: uncharacterized protein (121 aa).

An N-terminal signal peptide occupies residues 1-19 (MKKFALATIFALATTSAFA).

The protein to E.coli YgiW.

It is found in the periplasm. This is an uncharacterized protein from Haemophilus influenzae (strain ATCC 51907 / DSM 11121 / KW20 / Rd).